The sequence spans 520 residues: 4-hydroxyphenylacetate 3-monooxygenase oxygenase component (520 aa).

It belongs to the FADH(2)-utilizing monooxygenase family. As to quaternary structure, 4-HPA 3-monooxygenase consists of a reductase component HpaC and an oxygenase component HpaB.

The catalysed reaction is 4-hydroxyphenylacetate + FADH2 + O2 = 3,4-dihydroxyphenylacetate + FAD + H2O + H(+). It functions in the pathway aromatic compound metabolism; 4-hydroxyphenylacetate degradation; pyruvate and succinate semialdehyde from 4-hydroxyphenylacetate: step 1/7. Functionally, utilizes FADH(2) supplied by HpaC or by another flavin reductase, to catalyze the hydroxylation of 4-hydroxyphenylacetic acid, leading to the production of 3,4-DHPA. Can also oxidize phenol to catechol, and hydroxylate other phenol derivatives. This chain is 4-hydroxyphenylacetate 3-monooxygenase oxygenase component (hpaB), found in Escherichia coli.